A 288-amino-acid chain; its full sequence is Phosphatidylserine decarboxylase proenzyme (288 aa).

Catalysis depends on charge relay system; for autoendoproteolytic cleavage activity residues Asp92, His149, and Ser254. Residue Ser254 is the Schiff-base intermediate with substrate; via pyruvic acid; for decarboxylase activity of the active site. Ser254 is subject to Pyruvic acid (Ser); by autocatalysis.

The protein belongs to the phosphatidylserine decarboxylase family. PSD-B subfamily. Prokaryotic type I sub-subfamily. As to quaternary structure, heterodimer of a large membrane-associated beta subunit and a small pyruvoyl-containing alpha subunit. Pyruvate is required as a cofactor. Post-translationally, is synthesized initially as an inactive proenzyme. Formation of the active enzyme involves a self-maturation process in which the active site pyruvoyl group is generated from an internal serine residue via an autocatalytic post-translational modification. Two non-identical subunits are generated from the proenzyme in this reaction, and the pyruvate is formed at the N-terminus of the alpha chain, which is derived from the carboxyl end of the proenzyme. The autoendoproteolytic cleavage occurs by a canonical serine protease mechanism, in which the side chain hydroxyl group of the serine supplies its oxygen atom to form the C-terminus of the beta chain, while the remainder of the serine residue undergoes an oxidative deamination to produce ammonia and the pyruvoyl prosthetic group on the alpha chain. During this reaction, the Ser that is part of the protease active site of the proenzyme becomes the pyruvoyl prosthetic group, which constitutes an essential element of the active site of the mature decarboxylase.

The protein localises to the cell membrane. The catalysed reaction is a 1,2-diacyl-sn-glycero-3-phospho-L-serine + H(+) = a 1,2-diacyl-sn-glycero-3-phosphoethanolamine + CO2. It functions in the pathway phospholipid metabolism; phosphatidylethanolamine biosynthesis; phosphatidylethanolamine from CDP-diacylglycerol: step 2/2. Catalyzes the formation of phosphatidylethanolamine (PtdEtn) from phosphatidylserine (PtdSer). The sequence is that of Phosphatidylserine decarboxylase proenzyme from Bordetella petrii (strain ATCC BAA-461 / DSM 12804 / CCUG 43448).